The chain runs to 444 residues: uncharacterized protein (444 aa).

Residues 1–72 (MGFLTAAIRV…RPMWNVSFLR (72 aa)) constitute a chloroplast transit peptide. The tract at residues 77–107 (HSTPARETGDDDISKSENSSSQDGDSCTKLK) is disordered. Residues 92 to 101 (SENSSSQDGD) show a composition bias toward polar residues. One can recognise a CRM domain in the interval 175–272 (EILTPEEHFY…KNYVQPPTEI (98 aa)). Residues 292–355 (DALRAVRKYI…CLEDEQEEDE (64 aa)) adopt a coiled-coil conformation. 2 disordered regions span residues 344–364 (EECL…ATDS) and 392–426 (KFPA…PNFD). Over residues 346–357 (CLEDEQEEDEAG) the composition is skewed to acidic residues. Residues 406-426 (DLGKAKSEGEENDDDKSPNFD) show a composition bias toward basic and acidic residues.

It is found in the plastid. It localises to the chloroplast. This is an uncharacterized protein from Arabidopsis thaliana (Mouse-ear cress).